The sequence spans 558 residues: MKPFIEFKDFSFKYDAQAEPTLKEITLSIEKGEKVLIIGPSGSGKSTIGHCLNGIIPNIYKGQAEGSLTIDGKDVFDLSIYEKSHLVSTVLQDPDGQFIGLTVAEDLAFALENDCVAHETMFERVDTWADKLDLKELLQHRPQDLSGGQKQRVSLAGVMIDESPVLLFDEPLANLDPKSGQDTIDLIDHLHQTAETTTIIIEHRLEDVLYRPVDRVILINEGQVLFNGSPNDLLKTSLLQENGIREPLYVTVLRHLGLDIKNTSHLANLEQLDLSGVSFAGDISLKEPQEPQVLFDIQHLNFAYSSERPILKNLSFTLNKGERLAIVGKNGAGKSTLAKALCQFISYAGQIFYQGQDIASDSIKERSERIGYVLQNPNQMISQTMIFDEVALGLRLRGVDDSQIEKRVLKVLKTCGLYEFRKWPISALSFGQKKRVTIASILVLNPEVILLDEPTAGQDKKHYTEMMSFLNDLHALGHTIIMITHDMQLMLEYSDRALVISDGQILADQSPITLFNQPDILRIANLKQTSIFDLAQRLNCDPIALTHYYIDQQGGEDE.

ABC transporter domains are found at residues 5-246 and 295-527; these read IEFK…GIRE and FDIQ…ANLK. Residues 39–46 and 328–335 contribute to the ATP site; these read GPSGSGKS and GKNGAGKS.

Belongs to the ABC transporter superfamily.

It localises to the cell membrane. Functionally, probably part of an ABC transporter complex. Responsible for energy coupling to the transport system. This chain is Putative ABC transporter ATP-binding protein SMU_1934c (sdcBA), found in Streptococcus mutans serotype c (strain ATCC 700610 / UA159).